The primary structure comprises 308 residues: 4-hydroxyproline 2-epimerase (308 aa).

Cys88 functions as the Proton acceptor in the catalytic mechanism. Residues Gly89–His90, His208, and Asp232 contribute to the substrate site. The active-site Proton donor is Cys236. Gly237–Thr238 contributes to the substrate binding site.

This sequence belongs to the proline racemase family.

It catalyses the reaction trans-4-hydroxy-L-proline = cis-4-hydroxy-D-proline. Its function is as follows. Catalyzes the epimerization of trans-4-hydroxy-L-proline (t4LHyp) to cis-4-hydroxy-D-proline (c4DHyp). Is likely involved in a degradation pathway that converts t4LHyp to alpha-ketoglutarate. Can also catalyze the epimerization of trans-3-hydroxy-L-proline (t3LHyp) to cis-3-hydroxy-D-proline (c3DHyp), albeit with 200-fold lower efficiency. In Pseudomonas putida (strain ATCC 700007 / DSM 6899 / JCM 31910 / BCRC 17059 / LMG 24140 / F1), this protein is 4-hydroxyproline 2-epimerase.